We begin with the raw amino-acid sequence, 535 residues long: Sodium/hydrogen exchanger 1 (535 aa).

Topologically, residues 1–21 (MGMEVAAARLGALYTTSDYAS) are cytoplasmic. A helical membrane pass occupies residues 22 to 42 (VVSINLFVALLCACIVLGHLL). Residues 43–46 (EENR) lie on the Vacuolar side of the membrane. Residues 47-67 (WVNESITALIIGLCTGVVILL) traverse the membrane as a helical segment. At 68–75 (MTKGKSSH) the chain is on the cytoplasmic side. A helical transmembrane segment spans residues 76 to 96 (LFVFSEDLFFIYLLPPIIFNA). The Vacuolar portion of the chain corresponds to 97–114 (GFQVKKKQFFRNFMTITL). The chain crosses the membrane as a helical span at residues 115 to 135 (FGAVGTMISFFTISIAAIAIF). The Cytoplasmic portion of the chain corresponds to 136–137 (SR). A helical transmembrane segment spans residues 138–158 (MNIGTLDVGDFLAIGAIFSAT). Residues 159–173 (DSVCTLQVLNQDETP) lie on the Vacuolar side of the membrane. Residues 174–194 (FLYSLVFGEGVVNDATSIVLF) form a helical membrane-spanning segment. The Cytoplasmic portion of the chain corresponds to 195 to 218 (NALQNFDLVHIDAAVVLKFLGNFF). The chain crosses the membrane as a helical span at residues 219–239 (YLFLSSTFLGVFAGLLSAYII). Residues 240 to 264 (KKLYIGRHSTDREVALMMLMAYLSY) lie on the Vacuolar side of the membrane. Residues 265 to 285 (MLAELLDLSGILTVFFCGIVM) traverse the membrane as a helical segment. Residues 286-304 (SHYTWHNVTESSRVTTKHA) lie on the Cytoplasmic side of the membrane. Residues 305 to 325 (FATLSFIAETFLFLYVGMDAL) traverse the membrane as a helical segment. Residues 326–344 (DIEKWEFASDRPGKSIGIS) are Vacuolar-facing. A helical transmembrane segment spans residues 345–365 (SILLGLVLIGRAAFVFPLSFL). The Cytoplasmic segment spans residues 366–381 (SNLTKKAPNEKITWRQ). The helical transmembrane segment at 382 to 402 (QVVIWWAGLMRGAVSIALAYN) threads the bilayer. The Vacuolar segment spans residues 403–415 (KFTRSGHTQLHGN). Residues 416–436 (AIMITSTITVVLFSTMVFGMM) traverse the membrane as a helical segment. The Cytoplasmic portion of the chain corresponds to 437 to 535 (TKPLIRLLLP…SPTEQSHGGR (99 aa)). The interval 452 to 478 (VTSEPSSPKSLHSPLLTSMQGSDLEST) is disordered. Low complexity predominate over residues 454–469 (SEPSSPKSLHSPLLTS).

The protein belongs to the monovalent cation:proton antiporter 1 (CPA1) transporter (TC 2.A.36) family.

It is found in the vacuole membrane. The enzyme catalyses Na(+)(in) + H(+)(out) = Na(+)(out) + H(+)(in). It catalyses the reaction K(+)(in) + H(+)(out) = K(+)(out) + H(+)(in). In terms of biological role, vacuolar antiporter that acts in low affinity electroneutral exchange of protons H(+) for cations such as Na(+) or K(+) across membranes. Plays important roles in the transport of Na(+) and K(+) accumulated in the cytoplasm into vacuoles, and is involved in salt stress tolerance. In Oryza sativa subsp. japonica (Rice), this protein is Sodium/hydrogen exchanger 1.